Consider the following 159-residue polypeptide: NADH-quinone oxidoreductase subunit B (159 aa).

[4Fe-4S] cluster is bound by residues cysteine 36, cysteine 37, cysteine 102, and cysteine 132.

The protein belongs to the complex I 20 kDa subunit family. As to quaternary structure, NDH-1 is composed of 14 different subunits. Subunits NuoB, C, D, E, F, and G constitute the peripheral sector of the complex. [4Fe-4S] cluster is required as a cofactor.

The protein localises to the cell inner membrane. The catalysed reaction is a quinone + NADH + 5 H(+)(in) = a quinol + NAD(+) + 4 H(+)(out). In terms of biological role, NDH-1 shuttles electrons from NADH, via FMN and iron-sulfur (Fe-S) centers, to quinones in the respiratory chain. Couples the redox reaction to proton translocation (for every two electrons transferred, four hydrogen ions are translocated across the cytoplasmic membrane), and thus conserves the redox energy in a proton gradient. The chain is NADH-quinone oxidoreductase subunit B from Delftia acidovorans (strain DSM 14801 / SPH-1).